The following is a 614-amino-acid chain: Heat shock protein SSB1 (614 aa).

The tract at residues Met1 to Glu392 is nucleotide binding domain (NBD). Residues Thr16 to Tyr18, Lys74, Gly206 to Thr208, Glu272 to Ser279, and Gly343 contribute to the ATP site. Positions Thr393–Pro403 are inter-domain linker. Residues Leu404–Arg614 form a substrate binding domain (SBD) region. The interval Thr517–Ser613 is lid domain (SBDalpha). Residues Ile575 to Met583 carry the Nuclear export signal motif.

It belongs to the heat shock protein 70 family. In terms of assembly, interacts with HAT1 in starvation conditions.

It is found in the nucleus. The protein localises to the cytoplasm. It carries out the reaction ATP + H2O = ADP + phosphate + H(+). Its function is as follows. Chaperone that interacts with the histone acetyltransferase HAT1 and mediates its translocation from the nucleus to the cytoplasm during germination and starvation conditions. Within the cytoplasm, HAT1 regulates autophagy via acetylation of the autophagy-related proteins ATG3 and ATG9. The sequence is that of Heat shock protein SSB1 from Pyricularia oryzae (strain 70-15 / ATCC MYA-4617 / FGSC 8958) (Rice blast fungus).